The primary structure comprises 354 residues: Uroporphyrinogen decarboxylase (354 aa).

Substrate is bound by residues 27-31 (RQAGR), aspartate 77, tyrosine 154, threonine 209, and histidine 327.

Belongs to the uroporphyrinogen decarboxylase family. As to quaternary structure, homodimer.

It localises to the cytoplasm. The enzyme catalyses uroporphyrinogen III + 4 H(+) = coproporphyrinogen III + 4 CO2. It functions in the pathway porphyrin-containing compound metabolism; protoporphyrin-IX biosynthesis; coproporphyrinogen-III from 5-aminolevulinate: step 4/4. Catalyzes the decarboxylation of four acetate groups of uroporphyrinogen-III to yield coproporphyrinogen-III. This is Uroporphyrinogen decarboxylase from Histophilus somni (strain 129Pt) (Haemophilus somnus).